Consider the following 457-residue polypeptide: Asparagine--tRNA ligase (457 aa).

The protein belongs to the class-II aminoacyl-tRNA synthetase family. As to quaternary structure, homodimer.

The protein resides in the cytoplasm. It catalyses the reaction tRNA(Asn) + L-asparagine + ATP = L-asparaginyl-tRNA(Asn) + AMP + diphosphate + H(+). The protein is Asparagine--tRNA ligase of Phytoplasma australiense.